Reading from the N-terminus, the 608-residue chain is UvrABC system protein C (608 aa).

The GIY-YIG domain maps to 13 to 91 (HDPGVYRMFD…IKTFQPRYNV (79 aa)). One can recognise a UVR domain in the interval 201-236 (QQVLDHLIGKMERASRALNFEEAARYRDQIQAVRSV).

The protein belongs to the UvrC family. As to quaternary structure, interacts with UvrB in an incision complex.

The protein resides in the cytoplasm. The UvrABC repair system catalyzes the recognition and processing of DNA lesions. UvrC both incises the 5' and 3' sides of the lesion. The N-terminal half is responsible for the 3' incision and the C-terminal half is responsible for the 5' incision. This chain is UvrABC system protein C, found in Mannheimia succiniciproducens (strain KCTC 0769BP / MBEL55E).